Reading from the N-terminus, the 542-residue chain is Probable folate-biopterin transporter 8, chloroplastic (542 aa).

A chloroplast-targeting transit peptide spans 1–78 (MERIMINPLL…GVSEFEETAR (78 aa)). The segment at 24-45 (LSSIHRQQQQQERQSNNNTLFM) is disordered. Transmembrane regions (helical) follow at residues 103–123 (FPWL…PSTL), 132–152 (LPMV…IGSG), 155–175 (VPYI…MGIF), 181–201 (VLPS…ITEV), 223–243 (ALMA…YLLL), 246–266 (PPKI…VVSL), 308–328 (LIWA…VFCY), 338–358 (SVIG…TVVY), 369–389 (PLIH…YILV), 404–424 (VLCF…PFAV), 446–466 (LCLS…LIGI), and 477–497 (GILI…LVPM). Residues 506-542 (GKRGISKRSRRNRRVGRVVDKESVTYRRERESEEAQR) form a disordered region. Over residues 509-521 (GISKRSRRNRRVG) the composition is skewed to basic residues. A compositionally biased stretch (basic and acidic residues) spans 522 to 542 (RVVDKESVTYRRERESEEAQR).

It belongs to the major facilitator superfamily. Folate-biopterin transporter (TC 2.A.71) family.

The protein localises to the plastid. It is found in the chloroplast membrane. In terms of biological role, could mediate folate transport. The polypeptide is Probable folate-biopterin transporter 8, chloroplastic (Arabidopsis thaliana (Mouse-ear cress)).